We begin with the raw amino-acid sequence, 244 residues long: 1-(5-phosphoribosyl)-5-[(5-phosphoribosylamino)methylideneamino] imidazole-4-carboxamide isomerase (244 aa).

Residue D10 is the Proton acceptor of the active site. The Proton donor role is filled by D132.

Belongs to the HisA/HisF family.

It localises to the cytoplasm. The catalysed reaction is 1-(5-phospho-beta-D-ribosyl)-5-[(5-phospho-beta-D-ribosylamino)methylideneamino]imidazole-4-carboxamide = 5-[(5-phospho-1-deoxy-D-ribulos-1-ylimino)methylamino]-1-(5-phospho-beta-D-ribosyl)imidazole-4-carboxamide. It functions in the pathway amino-acid biosynthesis; L-histidine biosynthesis; L-histidine from 5-phospho-alpha-D-ribose 1-diphosphate: step 4/9. This Stenotrophomonas maltophilia (strain R551-3) protein is 1-(5-phosphoribosyl)-5-[(5-phosphoribosylamino)methylideneamino] imidazole-4-carboxamide isomerase.